The sequence spans 256 residues: Nuclear shuttle protein (256 aa).

Residues 1–16 (MYSTSNRRGRSQTQRG) show a composition bias toward polar residues. Positions 1–46 (MYSTSNRRGRSQTQRGSHVRRTGVKRSYGAARGDDRRRPNVVSKTQ) are disordered. A Bipartite nuclear localization signal motif is present at residues 21–42 (RTGVKRSYGAARGDDRRRPNVV). The Nuclear localization signal signature appears at 81–96 (SYVKTVPNRTRTYIKL). The tract at residues 150–187 (ELFGARIHCHGNLSVVPALKDRYYIRHVTKRVVSLEKD) is interaction with Arabidopsis thaliana NSI protein. Residues 177-198 (VTKRVVSLEKDTLLIDLHGTTQ) carry the Nuclear export signal motif.

The protein belongs to the begomovirus nuclear shuttle protein family. As to quaternary structure, binds to single-stranded and double-stranded viral DNA. Interacts with the host nuclear shuttle interacting (NSI) protein. This interaction may allow NSP to recruit NSI monomers to the viral genome and thus regulate nuclear export of viral genome by NSP.

The protein localises to the host nucleus. It localises to the host cytoplasm. The protein resides in the host cell membrane. Binds to the genomic viral ssDNA, shuttles it into and out of the cell nucleus. Begomoviruses use 2 proteins to transport their DNA from cell to cell. The nuclear shuttle protein (NSP) shuttles it between nucleus and cytoplasm and the movement protein (MP) probably transports the DNA-NSP complex to the cell periphery and facilitates movement across the cell wall. This chain is Nuclear shuttle protein, found in Squash leaf curl virus (SLCV).